Here is a 147-residue protein sequence, read N- to C-terminus: Hemoglobin subunit beta-M (147 aa).

Val2 bears the N-acetylvaline mark. The Globin domain occupies His3–His147. At Thr13 the chain carries Phosphothreonine. Ser45 carries the post-translational modification Phosphoserine. Lys60 carries the post-translational modification N6-acetyllysine. Residue His64 participates in heme b binding. Lys83 carries the post-translational modification N6-acetyllysine. His93 is a binding site for heme b. At Cys94 the chain carries S-nitrosocysteine. Residue Lys145 is modified to N6-acetyllysine.

This sequence belongs to the globin family. As to quaternary structure, heterotetramer of two alpha chains and two beta chains. In terms of tissue distribution, red blood cells.

Involved in oxygen transport from the lung to the various peripheral tissues. The chain is Hemoglobin subunit beta-M (HBB) from Didelphis virginiana (North American opossum).